Consider the following 681-residue polypeptide: tRNA wybutosine-synthesizing protein 4 (681 aa).

Residues 1-11 (MSNKNQRKTKS) show a composition bias toward basic residues. Residues 1 to 21 (MSNKNQRKTKSKDREVRKTND) form a disordered region. S-adenosyl-L-methionine contacts are provided by residues Arg66, Gly92, Asp119, 165–166 (NL), and Glu193.

Belongs to the methyltransferase superfamily. LCMT family.

The enzyme catalyses 7-[(3S)-3-amino-3-carboxypropyl]wyosine(37) in tRNA(Phe) + S-adenosyl-L-methionine = 7-[(3S)-(3-amino-3-methoxycarbonyl)propyl]wyosine(37) in tRNA(Phe) + S-adenosyl-L-homocysteine. The catalysed reaction is 7-[(3S)-(3-amino-3-methoxycarbonyl)propyl]wyosine(37) in tRNA(Phe) + S-adenosyl-L-methionine + CO2 = wybutosine(37) in tRNA(Phe) + S-adenosyl-L-homocysteine + 2 H(+). It participates in tRNA modification; wybutosine-tRNA(Phe) biosynthesis. Probable S-adenosyl-L-methionine-dependent methyltransferase that acts as a component of the wybutosine biosynthesis pathway. Wybutosine is a hyper modified guanosine with a tricyclic base found at the 3'-position adjacent to the anticodon of eukaryotic phenylalanine tRNA. May methylate the carboxyl group of leucine residues to form alpha-leucine ester residues. The protein is tRNA wybutosine-synthesizing protein 4 (ppm2) of Schizosaccharomyces pombe (strain 972 / ATCC 24843) (Fission yeast).